A 276-amino-acid polypeptide reads, in one-letter code: 2-dehydro-3-deoxyphosphooctonate aldolase (276 aa).

The protein belongs to the KdsA family.

It is found in the cytoplasm. The enzyme catalyses D-arabinose 5-phosphate + phosphoenolpyruvate + H2O = 3-deoxy-alpha-D-manno-2-octulosonate-8-phosphate + phosphate. It participates in carbohydrate biosynthesis; 3-deoxy-D-manno-octulosonate biosynthesis; 3-deoxy-D-manno-octulosonate from D-ribulose 5-phosphate: step 2/3. The protein operates within bacterial outer membrane biogenesis; lipopolysaccharide biosynthesis. This chain is 2-dehydro-3-deoxyphosphooctonate aldolase, found in Xanthomonas axonopodis pv. citri (strain 306).